Consider the following 141-residue polypeptide: Endoribonuclease YbeY (141 aa).

Residues His-105, His-109, and Asp-115 each coordinate Zn(2+).

The protein belongs to the endoribonuclease YbeY family. Requires Zn(2+) as cofactor.

It localises to the cytoplasm. Functionally, single strand-specific metallo-endoribonuclease involved in late-stage 70S ribosome quality control and in maturation of the 3' terminus of the 16S rRNA. The sequence is that of Endoribonuclease YbeY from Chloroherpeton thalassium (strain ATCC 35110 / GB-78).